The primary structure comprises 462 residues: Proline--tRNA ligase (462 aa).

It belongs to the class-II aminoacyl-tRNA synthetase family. ProS type 3 subfamily. Homodimer.

It localises to the cytoplasm. It catalyses the reaction tRNA(Pro) + L-proline + ATP = L-prolyl-tRNA(Pro) + AMP + diphosphate. Functionally, catalyzes the attachment of proline to tRNA(Pro) in a two-step reaction: proline is first activated by ATP to form Pro-AMP and then transferred to the acceptor end of tRNA(Pro). The sequence is that of Proline--tRNA ligase from Thermoplasma volcanium (strain ATCC 51530 / DSM 4299 / JCM 9571 / NBRC 15438 / GSS1).